Reading from the N-terminus, the 123-residue chain is Fluoride-specific ion channel FluC (123 aa).

4 helical membrane-spanning segments follow: residues 1 to 21, 32 to 52, 66 to 86, and 94 to 114; these read MQWLAIGLGAAFGACLRGWLA, LGTLGANVLGGLLIGLALVWF, FVITGFLGGLTTFSTFSAEVF, and LLAALGLVGLHVGMTLLATAL. 2 residues coordinate Na(+): glycine 73 and threonine 76.

Belongs to the fluoride channel Fluc/FEX (TC 1.A.43) family.

It is found in the cell inner membrane. It catalyses the reaction fluoride(in) = fluoride(out). Its activity is regulated as follows. Na(+) is not transported, but it plays an essential structural role and its presence is essential for fluoride channel function. Fluoride-specific ion channel. Important for reducing fluoride concentration in the cell, thus reducing its toxicity. The protein is Fluoride-specific ion channel FluC of Psychrobacter arcticus (strain DSM 17307 / VKM B-2377 / 273-4).